The chain runs to 110 residues: Large ribosomal subunit protein uL24 (110 aa).

It belongs to the universal ribosomal protein uL24 family. As to quaternary structure, part of the 50S ribosomal subunit.

Functionally, one of two assembly initiator proteins, it binds directly to the 5'-end of the 23S rRNA, where it nucleates assembly of the 50S subunit. One of the proteins that surrounds the polypeptide exit tunnel on the outside of the subunit. The polypeptide is Large ribosomal subunit protein uL24 (Ureaplasma parvum serovar 3 (strain ATCC 27815 / 27 / NCTC 11736)).